Consider the following 336-residue polypeptide: Holliday junction branch migration complex subunit RuvB (336 aa).

The segment at 4–184 (ADRLVAPGSI…FGIVQRLEFY (181 aa)) is large ATPase domain (RuvB-L). ATP-binding positions include Ile23, Arg24, Gly65, Lys68, Thr69, Thr70, 131–133 (EDY), Arg174, Tyr184, and Arg221. Mg(2+) is bound at residue Thr69. Positions 185 to 255 (QVADLQHIVS…VASQALDMLN (71 aa)) are small ATPAse domain (RuvB-S). Positions 258–336 (AEGFDYMDRK…HFGITPPQMP (79 aa)) are head domain (RuvB-H). DNA-binding residues include Arg294, Arg313, and Arg318.

This sequence belongs to the RuvB family. In terms of assembly, homohexamer. Forms an RuvA(8)-RuvB(12)-Holliday junction (HJ) complex. HJ DNA is sandwiched between 2 RuvA tetramers; dsDNA enters through RuvA and exits via RuvB. An RuvB hexamer assembles on each DNA strand where it exits the tetramer. Each RuvB hexamer is contacted by two RuvA subunits (via domain III) on 2 adjacent RuvB subunits; this complex drives branch migration. In the full resolvosome a probable DNA-RuvA(4)-RuvB(12)-RuvC(2) complex forms which resolves the HJ.

The protein resides in the cytoplasm. The enzyme catalyses ATP + H2O = ADP + phosphate + H(+). Its function is as follows. The RuvA-RuvB-RuvC complex processes Holliday junction (HJ) DNA during genetic recombination and DNA repair, while the RuvA-RuvB complex plays an important role in the rescue of blocked DNA replication forks via replication fork reversal (RFR). RuvA specifically binds to HJ cruciform DNA, conferring on it an open structure. The RuvB hexamer acts as an ATP-dependent pump, pulling dsDNA into and through the RuvAB complex. RuvB forms 2 homohexamers on either side of HJ DNA bound by 1 or 2 RuvA tetramers; 4 subunits per hexamer contact DNA at a time. Coordinated motions by a converter formed by DNA-disengaged RuvB subunits stimulates ATP hydrolysis and nucleotide exchange. Immobilization of the converter enables RuvB to convert the ATP-contained energy into a lever motion, pulling 2 nucleotides of DNA out of the RuvA tetramer per ATP hydrolyzed, thus driving DNA branch migration. The RuvB motors rotate together with the DNA substrate, which together with the progressing nucleotide cycle form the mechanistic basis for DNA recombination by continuous HJ branch migration. Branch migration allows RuvC to scan DNA until it finds its consensus sequence, where it cleaves and resolves cruciform DNA. This Cronobacter sakazakii (strain ATCC BAA-894) (Enterobacter sakazakii) protein is Holliday junction branch migration complex subunit RuvB.